We begin with the raw amino-acid sequence, 246 residues long: Probable transcriptional regulatory protein ESA_01378 (246 aa).

The protein belongs to the TACO1 family.

Its subcellular location is the cytoplasm. In Cronobacter sakazakii (strain ATCC BAA-894) (Enterobacter sakazakii), this protein is Probable transcriptional regulatory protein ESA_01378.